A 264-amino-acid polypeptide reads, in one-letter code: Glutamate racemase (264 aa).

Substrate contacts are provided by residues 10-11 (DS) and 42-43 (YG). The active-site Proton donor/acceptor is Cys-73. 74 to 75 (NT) contributes to the substrate binding site. Cys-183 acts as the Proton donor/acceptor in catalysis. 184–185 (TH) provides a ligand contact to substrate.

Belongs to the aspartate/glutamate racemases family.

It carries out the reaction L-glutamate = D-glutamate. Its pathway is cell wall biogenesis; peptidoglycan biosynthesis. In terms of biological role, provides the (R)-glutamate required for cell wall biosynthesis. The polypeptide is Glutamate racemase (Streptococcus sanguinis (strain SK36)).